We begin with the raw amino-acid sequence, 447 residues long: Na(+)-translocating NADH-quinone reductase subunit A (447 aa).

It belongs to the NqrA family. In terms of assembly, composed of six subunits; NqrA, NqrB, NqrC, NqrD, NqrE and NqrF.

The enzyme catalyses a ubiquinone + n Na(+)(in) + NADH + H(+) = a ubiquinol + n Na(+)(out) + NAD(+). NQR complex catalyzes the reduction of ubiquinone-1 to ubiquinol by two successive reactions, coupled with the transport of Na(+) ions from the cytoplasm to the periplasm. NqrA to NqrE are probably involved in the second step, the conversion of ubisemiquinone to ubiquinol. This Neisseria meningitidis serogroup A / serotype 4A (strain DSM 15465 / Z2491) protein is Na(+)-translocating NADH-quinone reductase subunit A.